Reading from the N-terminus, the 436-residue chain is bZIP transcription factor RISBZ1 (436 aa).

Residues 1-27 (MEHVFAVDEIPDPLWAPPPPVQPAAAA) are required for transactivation activity. The segment at 182–258 (LSPGPNGGSG…SARRSRSRKA (77 aa)) is disordered. Over residues 215-225 (PSEDDDMEGDA) the composition is skewed to acidic residues. The region spanning 236 to 299 (EDKVKKRKES…SAAAIDNRVL (64 aa)) is the bZIP domain. A basic motif region spans residues 238–257 (KVKKRKESNRESARRSRSRK). A leucine-zipper region spans residues 264-278 (LEEQVSLLRVENSSL).

As to quaternary structure, homodimer. Forms heterodimers with RISBZ2/BZP33 and RISBZ3/BZP20. Interacts with DOF3/RPBF. As to expression, specifically expressed in seeds. Expressed in aleurone and subaleurone layers of maturing seeds, but not in the embryo tissues.

It is found in the nucleus. Functionally, transcriptional activator that binds to the DNA specific sequence 5'-TGAGTCA-3' found in seed storage protein gene promoters. Involved in the endosperm-specific regulation of storage protein genes. Can activate the expression of genes encoding for the seed storage proteins glutelin, prolamin, globulin and the allergen RAG1. Functions synergistically with DOF3/RPBF to positively regulate quantitatively many seed storage protein genes. Functions synergistically with DOF3/RPBF to positively regulate some metabolic enzymes, such as alanine aminotransferase and pyruvate phosphate dikinase, that are expressed in developing seeds. Functions synergistically with DOF3/RPBF to positively regulate genes that are key players in the development of aleurone layers. Functions synergistically with DOF3/RPBF to positively regulate the glutelin GLUD-1 gene in endosperm of developing seeds. Can activate the expression of the bifunctional lysine-degrading enzyme, lysine ketoglutarate reductase/saccharopine dehydrogenase (LKR/SDH), one of the key regulators determining free lysine content in plants. Functions as a key regulator of starch synthesis in seeds, by direct binding to the promoters of starch-synthesizing genes, such as AGPL3, WAXXY and SBE1. The chain is bZIP transcription factor RISBZ1 from Oryza sativa subsp. japonica (Rice).